Consider the following 315-residue polypeptide: Methionyl-tRNA formyltransferase (315 aa).

113 to 116 lines the (6S)-5,6,7,8-tetrahydrofolate pocket; sequence SLLP.

This sequence belongs to the Fmt family.

The catalysed reaction is L-methionyl-tRNA(fMet) + (6R)-10-formyltetrahydrofolate = N-formyl-L-methionyl-tRNA(fMet) + (6S)-5,6,7,8-tetrahydrofolate + H(+). In terms of biological role, attaches a formyl group to the free amino group of methionyl-tRNA(fMet). The formyl group appears to play a dual role in the initiator identity of N-formylmethionyl-tRNA by promoting its recognition by IF2 and preventing the misappropriation of this tRNA by the elongation apparatus. This Klebsiella pneumoniae (strain 342) protein is Methionyl-tRNA formyltransferase.